A 456-amino-acid chain; its full sequence is Bestrophin homolog 18 (456 aa).

4 helical membrane passes run 29 to 49 (WSAI…VSAI), 83 to 103 (GFFI…IGFI), 234 to 254 (IIYP…GILA), and 267 to 287 (MIDL…MGWL). Positions 416–456 (ASSSRSLERQRSPGSFRMETLTPGSPTNTPIEPIDKIDKKK) are disordered.

Belongs to the anion channel-forming bestrophin (TC 1.A.46) family. Calcium-sensitive chloride channel subfamily. Forms oligomers.

It is found in the cell membrane. Functionally, forms chloride channels. The polypeptide is Bestrophin homolog 18 (best-18) (Caenorhabditis elegans).